The primary structure comprises 525 residues: MTDTTIRARGAQAAGSPAGAGPLDAPDGAPRAACLELDGITVTFPGVRALDAVSLSVRAGEVHGLMGENGAGKSTLLKVLSGVNQPQAGTLRLNGLAQRFGSTRAALEAGIAIIYQELHLVPELTVAENLMLGQLPNRAGVLDERALVARATAELERLGERIDPNTPVKLLSIGQRQMIEIGKALMRDARVIAFDEPTSSLSARETERLFRIIHALRADGRAIIYVTHRMEEVDALCDRVTVFRDGRRIETFESVADLDRDRLIGCMVGRPIADVYGYRPREPGDVAIEAKGLRGPGLAEPVSFSARRGEIVGFFGLVGAGRSELMKLLYGAARPSAGHVELNGRRVSFASPRDAVRAGIALCPEDRKQEGIVAIASVADNLNLSARRHFSPARLLLDARRERELAARYIARLAIKTRDADTPIGALSGGNQQKVILARWLAERIDVFLMDEPTRGIDVGARAEIYNLFYELADAGRTVLIVSSDLAEVIGVSDRIVVMKQGRIAGCVAKAQASPDALIKLALPR.

The segment at 1-25 (MTDTTIRARGAQAAGSPAGAGPLDA) is disordered. Low complexity predominate over residues 7–25 (RARGAQAAGSPAGAGPLDA). ABC transporter domains lie at 35-270 (LELD…MVGR) and 281-524 (REPG…LALP). 67-74 (GENGAGKS) lines the ATP pocket.

It belongs to the ABC transporter superfamily. Arabinose importer (TC 3.A.1.2.2) family. In terms of assembly, the complex is composed of two ATP-binding proteins (AraG), two transmembrane proteins (AraH) and a solute-binding protein (AraF).

The protein localises to the cell inner membrane. It catalyses the reaction L-arabinose(out) + ATP + H2O = L-arabinose(in) + ADP + phosphate + H(+). Part of the ABC transporter complex AraFGH involved in arabinose import. Responsible for energy coupling to the transport system. This Burkholderia thailandensis (strain ATCC 700388 / DSM 13276 / CCUG 48851 / CIP 106301 / E264) protein is Arabinose import ATP-binding protein AraG 2.